We begin with the raw amino-acid sequence, 118 residues long: Holo-[acyl-carrier-protein] synthase (118 aa).

Residues aspartate 8 and glutamate 57 each contribute to the Mg(2+) site.

This sequence belongs to the P-Pant transferase superfamily. AcpS family. Mg(2+) is required as a cofactor.

The protein localises to the cytoplasm. It carries out the reaction apo-[ACP] + CoA = holo-[ACP] + adenosine 3',5'-bisphosphate + H(+). Transfers the 4'-phosphopantetheine moiety from coenzyme A to a Ser of acyl-carrier-protein. The protein is Holo-[acyl-carrier-protein] synthase of Acholeplasma laidlawii (strain PG-8A).